We begin with the raw amino-acid sequence, 367 residues long: Peptide chain release factor 2 (367 aa).

Residue Q250 is modified to N5-methylglutamine.

Belongs to the prokaryotic/mitochondrial release factor family. In terms of processing, methylated by PrmC. Methylation increases the termination efficiency of RF2.

The protein localises to the cytoplasm. Its function is as follows. Peptide chain release factor 2 directs the termination of translation in response to the peptide chain termination codons UGA and UAA. This Kineococcus radiotolerans (strain ATCC BAA-149 / DSM 14245 / SRS30216) protein is Peptide chain release factor 2.